Consider the following 1270-residue polypeptide: MFRAYGNNGLKNPERISGENPDLYTQTRAAVQQRATTTLKRNEKQKLAVQNDSVFQQVGIGESDSDDDNGGVRIRMSPHRYIDPDDVFTLPEVKKQNALRDAKIAARAAQATAYNTFPSVKSLNGCQDPPETSQQSTSRKRSASNSRSPSRSHSRRYDRDNGRQRSRSREKKRRKKERRRKRSSSRSSSSSRSRDRSSRARDTSSHTLMKMNKPAKYAFLTDEEYRTCDAYISSAFITQTKSDCENYTQGVPKKEIAKCRLSVKFIVGLEHNNILFNNIYGAEYARDKENRPFWEQLDRYLKDVPKETFFRYVPPVGGYWKIRDRVDLLNLDHIDDDVLANDSDNRKDAFTFELEQAKKTFSENVHNIDALIKVISMEEEMCRRNVGSFSSSNPAALAERHQEMVKKAIKADGRNAKLRLMKIELLIKMDPNSPTIIDDFKNLTITFPHEPMVWIKYLDYIQYDSNVYNYKKLKNAFEDCIRQVTGLTNGTLLSHLNAVNDRPLLRMFHLWIYIRYLKWMISCAHTPVVLANIQATFEYNFGLADVEKRTSTNSKEREVRLEEFWESGLPRIGDEGAVGAEKMLKQSEELSDEDIQKLENDDFDILISRTEETIATCLQAQRDVQISWIEVEREMMNIDARVKRTKLKDCELYEDHVDDLETCELWDIIPFDRIRYYEAPGDCANFDFVQPFLELLGVKFLNSTNCFTTTEQIISDWISNDSTVNFYKTPTYTEKKCFEVGNNILKFMLYNRLKLTENNPEYLDKTMVKYLLAMLVTEASEQEKKLNFHSFKLNLKNLVGTFITKHPDIFKRAMLSKITGIVYMEKFVSWWERALKEQEKVVEADERRKNYKEIKMEEGVVDDVKFDVILLKKDKERVQTIRDKIRDMIDIAIPKSTEKLIQSADSSLPTLQLHLYANVLRGRLSILNQNALEETRDVFCKEILGIHTSEFESDEALLLALDQGLNELLEHCKEKDNLESVDSIPELPRAEALCEALKVVAVFVFLDKMAFSRRAVDCLIANAITKFEQFEAKKNDFNRGTYEKYCDQIDLKFITDTLITFFSHKKHRFIYNENFKKLIFQASQAFPCDSKYAKMLGELHSSGRLQVMKLQGFTDSRNSILNAKRDQQFDPELETRLLMNSLTIMFSWMNAANRIGDAGNQILYKNWKREAANTRDPAIWRQVIRVASKLSQKILKDDAYTRARGQCTWALNLHFDYIEAKTVRKNGDLMEMIYLILEQSMGQEHSLFVTDEEYMKTQQEIGLQYSESGR.

Disordered stretches follow at residues 1–22 (MFRA…ENPD) and 119–209 (SVKS…HTLM). Residues 119 to 135 (SVKSLNGCQDPPETSQQ) are compositionally biased toward polar residues. A compositionally biased stretch (basic residues) spans 164 to 184 (QRSRSREKKRRKKERRRKRSS). Residues 192–204 (RSRDRSSRARDTS) show a composition bias toward basic and acidic residues.

Belongs to the NRDE2 family. As to quaternary structure, interacts with nrde-3.

The protein localises to the nucleus. Its subcellular location is the nucleus speckle. The protein resides in the nucleolus. Protein of the nuclear speckles that regulates RNA exosomal degradation. Involved in short interfering RNAs-mediated silencing in nuclei. Functions with nrde-3 in the nuclear RNA-mediated gene silencing (RNAi) pathway to regulate gene expression via inhibition of RNA polymerases I and II during the elongation phase of transcription. Required for exogenous RNAi-induced H3K27 methylation. This chain is Nuclear exosome regulator NRDE2 (nrde-2), found in Caenorhabditis elegans.